The chain runs to 194 residues: Dephospho-CoA kinase (194 aa).

One can recognise a DPCK domain in the interval 3–194; that stretch reads TIGLTGGIGS…EQVDGFWGGL (192 aa). An ATP-binding site is contributed by 11-16; sequence GSGKST.

This sequence belongs to the CoaE family.

The protein resides in the cytoplasm. The catalysed reaction is 3'-dephospho-CoA + ATP = ADP + CoA + H(+). The protein operates within cofactor biosynthesis; coenzyme A biosynthesis; CoA from (R)-pantothenate: step 5/5. Its function is as follows. Catalyzes the phosphorylation of the 3'-hydroxyl group of dephosphocoenzyme A to form coenzyme A. The sequence is that of Dephospho-CoA kinase from Corynebacterium jeikeium (strain K411).